A 448-amino-acid polypeptide reads, in one-letter code: UDP-N-acetylmuramate--L-alanine ligase (448 aa).

An ATP-binding site is contributed by 118–124 (GTHGKTT).

This sequence belongs to the MurCDEF family.

It is found in the cytoplasm. The catalysed reaction is UDP-N-acetyl-alpha-D-muramate + L-alanine + ATP = UDP-N-acetyl-alpha-D-muramoyl-L-alanine + ADP + phosphate + H(+). Its pathway is cell wall biogenesis; peptidoglycan biosynthesis. Functionally, cell wall formation. The polypeptide is UDP-N-acetylmuramate--L-alanine ligase (Flavobacterium psychrophilum (strain ATCC 49511 / DSM 21280 / CIP 103535 / JIP02/86)).